The sequence spans 153 residues: MGFRGAWNKRNRLIEDLDTFLKLYKKAQKAYKKVRKVEFSNNDELIENAKKRYQEIWDEFRAFVNKKAWVDPKLWATIRKMNQTGDRKVVKTYSRDSQVISDFVNHTIAVHNGKTFVPIYITPEMVGHKLGEFAPTRTFRSHPEKSAKVVKKK.

Positions 1 to 63 are unknown; it reads MGFRGAWNKR…QEIWDEFRAF (63 aa). Residues 64 to 153 form a small ribosomal subunit protein uS19 region; the sequence is VNKKAWVDPK…EKSAKVVKKK (90 aa).

The protein belongs to the universal ribosomal protein uS19 family.

In terms of biological role, protein S19 forms a complex with S13 that binds strongly to the 16S ribosomal RNA. This Hydrogenobaculum sp. (strain Y04AAS1) protein is Small ribosomal subunit protein uS19.